We begin with the raw amino-acid sequence, 121 residues long: uncharacterized protein (121 aa).

It to M.jannaschii MJ0989.

This is an uncharacterized protein from Methanopyrus kandleri (strain AV19 / DSM 6324 / JCM 9639 / NBRC 100938).